A 449-amino-acid chain; its full sequence is MFS-type transporter 1 (449 aa).

Residues 1 to 37 (MTHSSSNEHEKEDDRRASDDMMDRDDQNAKEEQDVSK) are compositionally biased toward basic and acidic residues. The interval 1-43 (MTHSSSNEHEKEDDRRASDDMMDRDDQNAKEEQDVSKDAPPVN) is disordered. A run of 6 helical transmembrane segments spans residues 61-81 (VAGG…IGIF), 97-117 (TISW…LVVG), 127-147 (YILL…SLST), 152-172 (ILLS…TPAV), 185-205 (LANG…PIMF), and 212-232 (VGFP…LIIA). Residue asparagine 233 is glycosylated (N-linked (GlcNAc...) asparagine). 6 helical membrane-spanning segments follow: residues 262 to 282 (LLTT…INYI), 298 to 318 (YLIP…GFVA), 326 to 346 (VHTF…LPAA), 349 to 369 (APII…VAIL), 390 to 410 (FGVL…FVAH), and 420 to 440 (IWTG…RISL).

The protein belongs to the major facilitator superfamily. Monocarboxylate porter (TC 2.A.1.13) family.

The protein localises to the cell membrane. The catalysed reaction is erythrostominone(in) = erythrostominone(out). It catalyses the reaction deoxyerythrostominone(in) = deoxyerythrostominone(out). The enzyme catalyses epierythrostominol(in) = epierythrostominol(out). It carries out the reaction deoxyerythrostominol(in) = deoxyerythrostominol(out). Its function is as follows. MFS-type transporter that mediates the secretion of the 4 major naphthoquinone derivatives produced, erythrostominone (NQ1), deoxyerythrostominone (NQ2), epierythrostominol (NQ4), and deoxyerythrostominol (NQ5), as well as of 3 newly identified naphthoquinone derivatives termed NQ7, NQ8 and NQ9. This Ophiocordyceps sp. (strain BCC 1869) (Entomopathogenic fungus) protein is MFS-type transporter 1.